We begin with the raw amino-acid sequence, 344 residues long: Phenylalanine--tRNA ligase alpha subunit (344 aa).

Glu-256 is a Mg(2+) binding site.

The protein belongs to the class-II aminoacyl-tRNA synthetase family. Phe-tRNA synthetase alpha subunit type 1 subfamily. As to quaternary structure, tetramer of two alpha and two beta subunits. The cofactor is Mg(2+).

It is found in the cytoplasm. The catalysed reaction is tRNA(Phe) + L-phenylalanine + ATP = L-phenylalanyl-tRNA(Phe) + AMP + diphosphate + H(+). In Bacillus cereus (strain G9842), this protein is Phenylalanine--tRNA ligase alpha subunit.